A 158-amino-acid polypeptide reads, in one-letter code: Protein Smg homolog (158 aa).

The protein belongs to the Smg family.

This is Protein Smg homolog from Coxiella burnetii (strain Dugway 5J108-111).